Reading from the N-terminus, the 673-residue chain is MEPILNQGYGYGFALGLGAAFALLMAIITKVLTACMGQTQNSERFSTASRSVKSGLISSSTVSAWTWPATLLSSGAWSYTYGIMGGFMYGVGGTIQITLFLFLAIQIKKKAPAAHTVSECFFIRFGKLGHCVYLFYCISTNVLVSSLLLLGGSQGFSSTTGMNTVAACFLLPLGVMVYTTLGGLKATFISDWIHTVMIYIILIVTCYTVYCSSSLIGSPAKMYDMLKEVQEVYPATGGQSYLSFKNSEMMYLTWSVMIGGLSSVFGDPGYSQRAIASDAKSVFQGYLMGGLCWWIIPMALGSSAGLACRALLLNPASVTYPNVLSSVEISSGLPVIYGMASIFGKSGAAAGLVMLFMSITSATSAELIAFSSVTTYDIFRAYINPAANGKQLVRTAHLSVIGFSLFIGALSVGFNYAGVTAGWLLTFLGIILTPEVSAVTLCLFWNKMTRFSLVVGAPFGTITGVVCWLASTYSFCDGIVNKDTVMTSKACFVGNIVSMASSPLYIVLLSYIWPDKETFDLNQFRNITVGDDIDTTELNAIVSQLKDERILKLQTYWSIGINLFILIGCYVIIPTALLGSNHDLSKSSFSGLIIVCLIWILVAAIYIILFPLWQGRKSLANVISHIIRLKAPENILLDGLTPKQSSEDVGDATSFHMDKLDKEKEKSSELKTA.

14 helical membrane-spanning segments follow: residues glycine 8–isoleucine 28, isoleucine 83–leucine 103, valine 132–glycine 152, threonine 164–leucine 184, valine 196–serine 218, methionine 249–glycine 269, leucine 287–alanine 307, isoleucine 336–phenylalanine 356, glutamine 391–serine 411, leucine 424–asparagine 446, phenylalanine 451–serine 471, phenylalanine 492–isoleucine 512, isoleucine 559–glycine 579, and leucine 592–leucine 612.

This sequence belongs to the sodium:solute symporter (SSF) (TC 2.A.21) family.

The protein resides in the endoplasmic reticulum membrane. Its function is as follows. Involved in active transport of urea. The polypeptide is Probable urea active transporter 2 (dur3-2) (Schizosaccharomyces pombe (strain 972 / ATCC 24843) (Fission yeast)).